Consider the following 617-residue polypeptide: Diacylglycerol O-acyltransferase 1 (617 aa).

Disordered regions lie at residues 1-52 (MEPI…ETER) and 95-186 (RNTN…PKQE). The span at 7 to 17 (SNGNKNNSMDK) shows a compositional bias: polar residues. 2 stretches are compositionally biased toward low complexity: residues 18–34 (QPQQPQQPQQQQQQQQQ) and 96–105 (NTNNNNQNNT). Polar residues predominate over residues 106 to 140 (SPTFSSANGKQSNLTQRKINTQIQSKQPTNNNVQP). Low complexity predominate over residues 160–177 (QNNNGNNNNNNNNNNNNN). Transmembrane regions (helical) follow at residues 217-237 (LLLILLITASFRLVILNHLLY), 254-274 (WPGVMISLMINLFIIAAYLIE), 306-326 (IIAFSPNPASGIIVMILICTF), 399-419 (IVEALSLSLLILWMVNQYMLP), and 449-469 (YVWLLGFYVFFHLYLNIVAEI). An FYXDWWN motif motif is present at residues 477–483 (FYRDWWN). The next 3 helical transmembrane spans lie at 520 to 540 (GYFMCFFVSAIFHELVISIPF), 545 to 565 (LWGFFGIMSQMVLIALTKNLM), and 570 to 590 (LGNVIFWISIVLGQPLVVLLY). Residue His532 is part of the active site.

This sequence belongs to the membrane-bound acyltransferase family. Sterol o-acyltransferase subfamily.

Its subcellular location is the endoplasmic reticulum membrane. The catalysed reaction is an acyl-CoA + a 1,2-diacyl-sn-glycerol = a triacyl-sn-glycerol + CoA. It catalyses the reaction all-trans-retinol + an acyl-CoA = an all-trans-retinyl ester + CoA. The enzyme catalyses 2-(9Z-octadecenoyl)-glycerol + (9Z)-octadecenoyl-CoA = 1,2-di-(9Z-octadecenoyl)-sn-glycerol + CoA. It carries out the reaction 1,2-di-(9Z-octadecenoyl)-sn-glycerol + (9Z)-octadecenoyl-CoA = 1,2,3-tri-(9Z-octadecenoyl)-glycerol + CoA. The catalysed reaction is all-trans-retinol + hexadecanoyl-CoA = all-trans-retinyl hexadecanoate + CoA. It catalyses the reaction 1-O-(9Z-octadecenyl)-glycerol + (9Z)-octadecenoyl-CoA = 1-O-(9Z-octadecyl)-3-(9Z-octadecenoyl)-glycerol + CoA. The enzyme catalyses 1-O-(9Z-octadecyl)-3-(9Z-octadecenoyl)-glycerol + (9Z)-octadecenoyl-CoA = 1-O-(9Z-octadecenyl)-2,3-di-(9Z-octadecenoyl)glycerol + CoA. It carries out the reaction 1-(9Z-octadecenoyl)-glycerol + (9Z)-octadecenoyl-CoA = 1,2-di-(9Z-octadecenoyl)-glycerol + CoA. The catalysed reaction is 1,2-di-(9Z-octadecenoyl)-glycerol + (9Z)-octadecenoate + H(+) = 1,2,3-tri-(9Z-octadecenoyl)-glycerol + H2O. It catalyses the reaction 1-octadecanoyl-2-(5Z,8Z,11Z,14Z-eicosatetraenoyl)-sn-glycerol + (9Z)-octadecenoyl-CoA = 1-octadecanoyl-2-(5Z,8Z,11Z,14Z)-eicosatetraenoyl-3-(9Z)-octadecenoyl-sn-glycerol + CoA. The enzyme catalyses hexadecane-1,2-diol + 2 hexadecanoyl-CoA = 1,2-O,O-dihexadecanoyl-1,2-hexadecanediol + 2 CoA. It carries out the reaction hexadecane-1,2-diol + hexadecanoyl-CoA = 2-hydroxyhexadecyl hexadecanoate + CoA. The catalysed reaction is 2-(9Z-octadecenoyl)-glycerol + hexadecanoyl-CoA = 1-hexadecanoyl-2-(9Z-octadecenoyl)-sn-glycerol + CoA. It catalyses the reaction 1,2-di-(9Z-octadecenoyl)-sn-glycerol + hexadecanoyl-CoA = 1,2-di-(9Z)-octadecenoyl-3-hexadecanoyl-sn-glycerol + CoA. The enzyme catalyses hexadecan-1-ol + hexadecanoyl-CoA = hexadecanyl hexadecanoate + CoA. It carries out the reaction 13-cis-retinol + hexadecanoyl-CoA = 13-cis-retinyl hexadecanoate + CoA. The catalysed reaction is 1,3-di-(9Z-octadecenoyl)-glycerol + (9Z)-octadecenoyl-CoA = 1,2,3-tri-(9Z-octadecenoyl)-glycerol + CoA. It catalyses the reaction 2,3-di-(9Z)-octadecenoyl-sn-glycerol + (9Z)-octadecenoyl-CoA = 1,2,3-tri-(9Z-octadecenoyl)-glycerol + CoA. It functions in the pathway lipid metabolism; glycerolipid metabolism. Functionally, catalyzes the terminal and only committed step in triacylglycerol synthesis by using diacylglycerol and fatty acyl CoA as substrates. This chain is Diacylglycerol O-acyltransferase 1 (dgat1), found in Dictyostelium discoideum (Social amoeba).